We begin with the raw amino-acid sequence, 518 residues long: Voltage-gated potassium channel regulatory subunit KCNG2 (518 aa).

Topologically, residues 1-214 are cytoplasmic; the sequence is MALLTGNADR…DMVENPHSGI (214 aa). A helical membrane pass occupies residues 215–236; that stretch reads PGKIFACISISFVAITAVSLCI. The Extracellular portion of the chain corresponds to 237-257; that stretch reads STMPDVREEEDRGECSQKCYD. Residues 258 to 279 form a helical membrane-spanning segment; it reads IFVLETVCVAWFSFEFLLRSIQ. The Cytoplasmic portion of the chain corresponds to 280 to 290; it reads AENKCAFLKTP. The helical transmembrane segment at 291 to 311 threads the bilayer; that stretch reads LNIIDILAILPFYISLIVDMA. Residues 312-331 lie on the Extracellular side of the membrane; sequence STKNSSKPGGGAGNKYLERV. A helical; Voltage-sensor membrane pass occupies residues 332 to 352; that stretch reads GLVLRFLRALRILYVMRLARH. Over 353–367 the chain is Cytoplasmic; that stretch reads SLGLQTLGLTVRRCT. A helical transmembrane segment spans residues 368-389; it reads REFGLLLLFLCVAMALFSPLVY. Topologically, residues 390 to 404 are extracellular; that stretch reads LAESELGAKQEFTSI. The helical intramembrane region spans 405–416; that stretch reads PTSYWWAVISMT. Residues 417–422 carry the Selectivity filter motif; it reads TVGYGD. Residues 417–424 lie within the membrane without spanning it; it reads TVGYGDMV. Residues 425 to 431 are Extracellular-facing; sequence PRSIPGQ. Residues 432–460 form a helical membrane-spanning segment; sequence VVALSSILSGILLMAFPVTSIFHTFSRSY. Topologically, residues 461 to 518 are cytoplasmic; sequence SELKEQQQRAASRQMHQLEESTKLAGGGSSQWITAASPPDAAREDGRPELDQEAKRSC. A disordered region spans residues 473 to 518; sequence RQMHQLEESTKLAGGGSSQWITAASPPDAAREDGRPELDQEAKRSC. Residues 501 to 518 are compositionally biased toward basic and acidic residues; that stretch reads AAREDGRPELDQEAKRSC.

It belongs to the potassium channel family. G (TC 1.A.1.2) subfamily. Kv6.2/KCNG2 sub-subfamily. In terms of assembly, heterodimer with KCNB1.

It is found in the cell membrane. Regulatory alpha-subunit of the voltage-gated potassium (Kv) channel which, when coassembled with KCNB1, can modulate the kinetics and conductance-voltage relationship. Modulates channel activity by shifting the threshold and the half-maximal activation to more negative values. Potassium channel subunit that does not form functional channels by itself. This is Voltage-gated potassium channel regulatory subunit KCNG2 from Gallus gallus (Chicken).